We begin with the raw amino-acid sequence, 184 residues long: ATP synthase subunit b, chloroplastic (184 aa).

Residues 27–49 (LATNPINLSVVLGVLIFFGKGVL) form a helical membrane-spanning segment.

Belongs to the ATPase B chain family. F-type ATPases have 2 components, F(1) - the catalytic core - and F(0) - the membrane proton channel. F(1) has five subunits: alpha(3), beta(3), gamma(1), delta(1), epsilon(1). F(0) has four main subunits: a(1), b(1), b'(1) and c(10-14). The alpha and beta chains form an alternating ring which encloses part of the gamma chain. F(1) is attached to F(0) by a central stalk formed by the gamma and epsilon chains, while a peripheral stalk is formed by the delta, b and b' chains.

The protein resides in the plastid. It is found in the chloroplast thylakoid membrane. Functionally, f(1)F(0) ATP synthase produces ATP from ADP in the presence of a proton or sodium gradient. F-type ATPases consist of two structural domains, F(1) containing the extramembraneous catalytic core and F(0) containing the membrane proton channel, linked together by a central stalk and a peripheral stalk. During catalysis, ATP synthesis in the catalytic domain of F(1) is coupled via a rotary mechanism of the central stalk subunits to proton translocation. Its function is as follows. Component of the F(0) channel, it forms part of the peripheral stalk, linking F(1) to F(0). This Ceratophyllum demersum (Rigid hornwort) protein is ATP synthase subunit b, chloroplastic.